The chain runs to 106 residues: Iron-sulfur cluster assembly protein CyaY (106 aa).

It belongs to the frataxin family.

In terms of biological role, involved in iron-sulfur (Fe-S) cluster assembly. May act as a regulator of Fe-S biogenesis. The polypeptide is Iron-sulfur cluster assembly protein CyaY (Salmonella newport (strain SL254)).